The sequence spans 278 residues: Type II restriction enzyme NgoPII (278 aa).

The protein belongs to the NgoPII type II restriction endonuclease family.

The catalysed reaction is Endonucleolytic cleavage of DNA to give specific double-stranded fragments with terminal 5'-phosphates.. A P subtype restriction enzyme that recognizes the double-stranded sequence 5'-GGCC-3' and cleaves after G-2. The sequence is that of Type II restriction enzyme NgoPII (ngoPIIR) from Neisseria gonorrhoeae.